The primary structure comprises 356 residues: tRNA N6-adenosine threonylcarbamoyltransferase (356 aa).

Fe cation-binding residues include His-115 and His-119. Residues 138-142 (LVSGG), Asp-171, Gly-184, and Asn-283 contribute to the substrate site. Asp-311 contributes to the Fe cation binding site.

It belongs to the KAE1 / TsaD family. The cofactor is Fe(2+).

It localises to the cytoplasm. The enzyme catalyses L-threonylcarbamoyladenylate + adenosine(37) in tRNA = N(6)-L-threonylcarbamoyladenosine(37) in tRNA + AMP + H(+). In terms of biological role, required for the formation of a threonylcarbamoyl group on adenosine at position 37 (t(6)A37) in tRNAs that read codons beginning with adenine. Is involved in the transfer of the threonylcarbamoyl moiety of threonylcarbamoyl-AMP (TC-AMP) to the N6 group of A37, together with TsaE and TsaB. TsaD likely plays a direct catalytic role in this reaction. The sequence is that of tRNA N6-adenosine threonylcarbamoyltransferase from Prochlorococcus marinus (strain MIT 9313).